The sequence spans 260 residues: Indole-3-glycerol phosphate synthase (260 aa).

The protein belongs to the TrpC family.

It catalyses the reaction 1-(2-carboxyphenylamino)-1-deoxy-D-ribulose 5-phosphate + H(+) = (1S,2R)-1-C-(indol-3-yl)glycerol 3-phosphate + CO2 + H2O. The protein operates within amino-acid biosynthesis; L-tryptophan biosynthesis; L-tryptophan from chorismate: step 4/5. The polypeptide is Indole-3-glycerol phosphate synthase (Neisseria gonorrhoeae (strain ATCC 700825 / FA 1090)).